The chain runs to 192 residues: Small ribosomal subunit protein uS5 (192 aa).

Residues 20-83 form the S5 DRBM domain; that stretch reads FVDKLVHINR…EAAKRGLIRV (64 aa). The disordered stretch occupies residues 162 to 192; it reads SVAARRGLKVSALQARRRDADPADTSDAAVA.

Belongs to the universal ribosomal protein uS5 family. Part of the 30S ribosomal subunit. Contacts proteins S4 and S8.

With S4 and S12 plays an important role in translational accuracy. Its function is as follows. Located at the back of the 30S subunit body where it stabilizes the conformation of the head with respect to the body. In Methylorubrum populi (strain ATCC BAA-705 / NCIMB 13946 / BJ001) (Methylobacterium populi), this protein is Small ribosomal subunit protein uS5.